Here is a 1121-residue protein sequence, read N- to C-terminus: Linoleate 10R-lipoxygenase (1121 aa).

The segment at 1-66 is disordered; sequence MLRRFSSTFK…NEKKGNSVSP (66 aa). Positions 22–36 are enriched in low complexity; that stretch reads TASSSSAAVANTNNN. A compositionally biased stretch (basic and acidic residues) spans 50–61; that stretch reads SSSDDDRNEKKG. The active-site Proton acceptor is the H253. Residues D254, S269, Y271, D273, and S275 each coordinate Ca(2+).

This sequence belongs to the peroxidase family.

It catalyses the reaction (9Z,12Z)-octadecadienoate + O2 = (8E,10R,12Z)-10-hydroperoxyoctadeca-8,12-dienoate. Responsible for the synthesis of various fatty acid-derived oxylipins. Oxidizes linoleic acid primarily to 10R-hydroperoxy-8,12-octadecadienoic acid (10R-HPODE) and, to a lesser extent, 8R-hydroperoxylinoleic acid (8R-HPODE). Also synthesizes 10-hydroxy-octadeca-8,12-dienoic acid (10-HODE) from linoleic acid and primarily 8R-hydroxy-octadeca-9-monoenoic acid (8-HOME, also known as psiB beta) from oleic acid. 8-HOME forms part of psi factor, a mixture of oxylipins that regulates the balance between sexual and asexual spore production. Displays epoxyalcohol synthase activity. Plays a role in the synthesis of prostaglandins which may be required for pathogenicity. This chain is Linoleate 10R-lipoxygenase, found in Aspergillus fumigatus (strain ATCC MYA-4609 / CBS 101355 / FGSC A1100 / Af293) (Neosartorya fumigata).